A 114-amino-acid chain; its full sequence is uncharacterized protein (114 aa).

2 helical membrane passes run 9–29 and 75–95; these read LAIFLFFVAVGFIIFIGSFWL and LVHFFIPVGFGLLFGIAVAII.

It localises to the cell membrane. This is an uncharacterized protein from Mycoplasma pneumoniae (strain ATCC 29342 / M129 / Subtype 1) (Mycoplasmoides pneumoniae).